A 254-amino-acid polypeptide reads, in one-letter code: tRNA (guanine-N(1)-)-methyltransferase (254 aa).

S-adenosyl-L-methionine is bound by residues Gly-121 and 141–146 (LGDYVL).

Belongs to the RNA methyltransferase TrmD family. Homodimer.

Its subcellular location is the cytoplasm. It carries out the reaction guanosine(37) in tRNA + S-adenosyl-L-methionine = N(1)-methylguanosine(37) in tRNA + S-adenosyl-L-homocysteine + H(+). In terms of biological role, specifically methylates guanosine-37 in various tRNAs. This chain is tRNA (guanine-N(1)-)-methyltransferase, found in Psychrobacter cryohalolentis (strain ATCC BAA-1226 / DSM 17306 / VKM B-2378 / K5).